Here is a 144-residue protein sequence, read N- to C-terminus: Angiogenin-4 (144 aa).

The N-terminal stretch at 1 to 24 (MTMSPCPLLLVFVLGLVVIPPTLA) is a signal peptide. His-36 serves as the catalytic Proton acceptor. Intrachain disulfides connect Cys-49–Cys-103, Cys-62–Cys-114, and Cys-80–Cys-129. A Nucleolar localization signal motif is present at residues 54–58 (KERKL). The Proton donor role is filled by His-136.

It belongs to the pancreatic ribonuclease family. In terms of tissue distribution, detected in small intestine, caecum and colon, with the highest expression in Paneth cells in the intestinal epithelium.

The protein resides in the secreted. The protein localises to the cytoplasmic vesicle. Its subcellular location is the secretory vesicle lumen. It localises to the nucleus. It is found in the nucleolus. In terms of biological role, has bactericidal activity against E.faecalis and L.monocytogenes, but not against L.innocua and E.coli. Promotes angiogenesis (in vitro). Has low ribonuclease activity (in vitro). Promotes proliferation of melanoma cells, but not of endothelial cells or fibroblasts (in vitro). This chain is Angiogenin-4 (Ang4), found in Mus musculus (Mouse).